We begin with the raw amino-acid sequence, 384 residues long: Protein Brevis radix-like 4 (384 aa).

2 disordered regions span residues 1 to 35 (MLTCIARSKRAGDESSGQPDDPDSKNAKSLTSQLK) and 50 to 78 (PCTAAQGQGQGQGPIKNNPSSSSVKSDFE). Residues 150–205 (KEWVAQVEPGVLITFVSLPGGGNDLKRIRFSRDMFNKLQAQRWWADNYDKVMELYN) form the BRX 1 domain. Disordered regions lie at residues 214-270 (FPLP…DHNS) and 304-325 (SIRSSSSRDADRSEEMSVSNAS). Residues 221–235 (RSEDENAKVEYHPED) show a composition bias toward basic and acidic residues. Over residues 260–270 (YSSSDSLDHNS) the composition is skewed to polar residues. The span at 309–318 (SSRDADRSEE) shows a compositional bias: basic and acidic residues. The region spanning 329–384 (NEWVEQDEPGVYITIKVLPGGKRELRRVRFSRERFGEMHARLWWEENRARIHEQYL) is the BRX 2 domain.

The protein belongs to the BRX family. In terms of tissue distribution, expressed in roots.

It is found in the nucleus. This is Protein Brevis radix-like 4 (BRXL4) from Arabidopsis thaliana (Mouse-ear cress).